The chain runs to 61 residues: Neurotoxin-like protein 1 (61 aa).

Intrachain disulfides connect Cys3/Cys24, Cys17/Cys38, Cys42/Cys53, and Cys54/Cys59.

In terms of tissue distribution, expressed by the venom gland.

It localises to the secreted. The polypeptide is Neurotoxin-like protein 1 (Causus rhombeatus (Rhombic night adder)).